The primary structure comprises 123 residues: uncharacterized protein (123 aa).

To insertion element IS1016 transposase.

This is an uncharacterized protein from Haemophilus influenzae (strain ATCC 51907 / DSM 11121 / KW20 / Rd).